Reading from the N-terminus, the 122-residue chain is Ribosome-binding factor A (122 aa).

The segment covering 95–111 has biased composition (basic and acidic residues); sequence PTVERVTRIQRTLREVS. A disordered region spans residues 95-122; that stretch reads PTVERVTRIQRTLREVSGEDGDGNGTQE.

It belongs to the RbfA family. Monomer. Binds 30S ribosomal subunits, but not 50S ribosomal subunits or 70S ribosomes.

The protein localises to the cytoplasm. One of several proteins that assist in the late maturation steps of the functional core of the 30S ribosomal subunit. Associates with free 30S ribosomal subunits (but not with 30S subunits that are part of 70S ribosomes or polysomes). Required for efficient processing of 16S rRNA. May interact with the 5'-terminal helix region of 16S rRNA. The sequence is that of Ribosome-binding factor A from Rubrobacter xylanophilus (strain DSM 9941 / JCM 11954 / NBRC 16129 / PRD-1).